Reading from the N-terminus, the 121-residue chain is MKEIIAIIRPSKMAQTKTVLEGLGFPAMTANRVLGRGKQKAIVGELGFEVDNKELLNQPGDMRYIPKTMLTLIVPDEDASLVVEAIMKVNKSGQYGDGKIFVCPIEDIITVRTSERGEAAI.

It belongs to the P(II) protein family.

Its function is as follows. Could be involved in the regulation of nitrogen fixation. This is Nitrogen fixation nifHD region glnB-like protein 2 (glnBII) from Methanococcus maripaludis (Methanococcus deltae).